A 141-amino-acid chain; its full sequence is HTH-type transcriptional repressor NsrR (141 aa).

The HTH rrf2-type domain maps to 2-129 (QLTSFTDYGL…DNYTLADLVE (128 aa)). The H-T-H motif DNA-binding region spans 28–51 (ISEVTDVYGVSRNHMVKIINQLSR). Positions 91, 96, and 102 each coordinate [2Fe-2S] cluster.

[2Fe-2S] cluster serves as cofactor.

In terms of biological role, nitric oxide-sensitive repressor of genes involved in protecting the cell against nitrosative stress. May require iron for activity. The chain is HTH-type transcriptional repressor NsrR from Escherichia coli O127:H6 (strain E2348/69 / EPEC).